The chain runs to 57 residues: uncharacterized protein (57 aa).

A disordered region spans residues 1–57 (MDDTLPKQMTPTDTSPLKEEQAHCNNKTLENQPKNINDNKCTDSQNTDLQNTEPSKV). Residues 23–57 (HCNNKTLENQPKNINDNKCTDSQNTDLQNTEPSKV) are compositionally biased toward polar residues.

This is an uncharacterized protein from Ornithodoros (relapsing fever ticks).